A 326-amino-acid polypeptide reads, in one-letter code: NDRG-like protein (326 aa).

This sequence belongs to the NDRG family.

The sequence is that of NDRG-like protein from Dictyostelium discoideum (Social amoeba).